The sequence spans 322 residues: Protein-L-isoaspartate O-methyltransferase (322 aa).

The segment at 1–101 (MSGERAKRFP…AKQGDRSAAP (101 aa)) is disordered. The segment covering 14–29 (EDLKREPRKPEGRVAE) has biased composition (basic and acidic residues). Composition is skewed to low complexity over residues 33–51 (AGDAARQRLTAAAAAPAAA) and 76–91 (HAPAAPGAAKRAPQGG). The active site involves serine 170.

Belongs to the methyltransferase superfamily. L-isoaspartyl/D-aspartyl protein methyltransferase family.

Its subcellular location is the cytoplasm. It catalyses the reaction [protein]-L-isoaspartate + S-adenosyl-L-methionine = [protein]-L-isoaspartate alpha-methyl ester + S-adenosyl-L-homocysteine. Catalyzes the methyl esterification of L-isoaspartyl residues in peptides and proteins that result from spontaneous decomposition of normal L-aspartyl and L-asparaginyl residues. It plays a role in the repair and/or degradation of damaged proteins. The chain is Protein-L-isoaspartate O-methyltransferase from Burkholderia pseudomallei (strain 1710b).